Here is a 95-residue protein sequence, read N- to C-terminus: Co-chaperonin GroES (95 aa).

This sequence belongs to the GroES chaperonin family. Heptamer of 7 subunits arranged in a ring. Interacts with the chaperonin GroEL.

It localises to the cytoplasm. Together with the chaperonin GroEL, plays an essential role in assisting protein folding. The GroEL-GroES system forms a nano-cage that allows encapsulation of the non-native substrate proteins and provides a physical environment optimized to promote and accelerate protein folding. GroES binds to the apical surface of the GroEL ring, thereby capping the opening of the GroEL channel. In Rhizorhabdus wittichii (strain DSM 6014 / CCUG 31198 / JCM 15750 / NBRC 105917 / EY 4224 / RW1) (Sphingomonas wittichii), this protein is Co-chaperonin GroES.